Here is a 381-residue protein sequence, read N- to C-terminus: Terpene cyclase ATR13 (381 aa).

This sequence belongs to the terpene synthase family.

It participates in mycotoxin biosynthesis. Its function is as follows. Terpene cyclase; part of the core atranone cluster (CAC) which products are predicted to catalyze most or all steps of mycotoxin atranone synthesis, starting from geranylgeranyl pyrophosphate (GGPP). The initial cyclization of GGPP to dolabellane is probably performed by the terpene cyclase ATR13. The Baeyer-Villiger oxidation near the end of the atranone synthesis, which converts atranones D and E to atranones F and G is predicted to be catalyzed by the monooxygenase ATR8. Of the CAC's other predicted gene products, the reducing PKS ATR6 might synthesize a polyketide chain. This polyketide is probably transferred onto the atranone backbone by the polyketide transferase ATR5. Other predicted CAC products include 4 oxygenases (ATR2, ATR3, ATR4, and ATR14), 3 short-chain reductases (ATR7, ATR9, and ATR10), and a methyltransferase (ATR12). These may all be involved in the various steps of atranone biosynthesis, although their specific roles must await experimental determination. The chain is Terpene cyclase ATR13 from Stachybotrys chlorohalonatus (strain IBT 40285).